Reading from the N-terminus, the 200-residue chain is Glycerol-3-phosphate acyltransferase (200 aa).

The next 5 helical transmembrane spans lie at 2–22, 51–71, 84–104, 114–134, and 159–179; these read FNIPAVAVSYLIGSLSFAVIV, KAAALTLLGDAAKGLVAVLLA, AIAAVALAALVGHMWPVFFGF, LGVLLALSPATALVCALIWLV, and FFMPHVSWVWATVAIALLVLF.

Belongs to the PlsY family. Probably interacts with PlsX.

The protein localises to the cell inner membrane. The enzyme catalyses an acyl phosphate + sn-glycerol 3-phosphate = a 1-acyl-sn-glycero-3-phosphate + phosphate. Its pathway is lipid metabolism; phospholipid metabolism. In terms of biological role, catalyzes the transfer of an acyl group from acyl-phosphate (acyl-PO(4)) to glycerol-3-phosphate (G3P) to form lysophosphatidic acid (LPA). This enzyme utilizes acyl-phosphate as fatty acyl donor, but not acyl-CoA or acyl-ACP. This is Glycerol-3-phosphate acyltransferase from Neisseria meningitidis serogroup B (strain ATCC BAA-335 / MC58).